The chain runs to 473 residues: Serine palmitoyltransferase 1 (473 aa).

The tract at residues M1–P66 is interaction with SPTLC2. A helical transmembrane segment spans residues A16–I36. The residue at position 164 (Y164) is a Phosphotyrosine; by ABL.

The protein belongs to the class-II pyridoxal-phosphate-dependent aminotransferase family. In terms of assembly, component of the serine palmitoyltransferase (SPT) complex, which is also composed of SPTLC2 or SPTLC3 and SPTSSA or SPTSSB. The heterodimer with SPTLC2 or SPTLC3 forms the catalytic core of the enzyme, while SPTSSA or SPTSSB subunits determine substrate specificity. SPT also interacts with ORMDL proteins, especially ORMDL3, which negatively regulate SPT activity in the presence of ceramides. Forms dimers of heterodimers with SPTLC2. Interacts with RTN4. Requires pyridoxal 5'-phosphate as cofactor. Phosphorylation at Tyr-164 inhibits activity and promotes cell survival.

The protein resides in the endoplasmic reticulum membrane. It carries out the reaction L-serine + hexadecanoyl-CoA + H(+) = 3-oxosphinganine + CO2 + CoA. The enzyme catalyses octadecanoyl-CoA + L-serine + H(+) = 3-oxoeicosasphinganine + CO2 + CoA. It catalyses the reaction tetradecanoyl-CoA + L-serine + H(+) = 3-oxohexadecasphinganine + CO2 + CoA. The catalysed reaction is dodecanoyl-CoA + L-serine + H(+) = 3-oxotetradecasphinganine + CO2 + CoA. Its pathway is lipid metabolism; sphingolipid metabolism. SPT complex catalytic activity is negatively regulated by ORMDL proteins, including ORMDL3, in the presence of ceramides. This mechanism allows to maintain ceramide levels at sufficient concentrations for the production of complex sphingolipids, but which prevents the accumulation of ceramides to levels that trigger apoptosis. Its function is as follows. Component of the serine palmitoyltransferase multisubunit enzyme (SPT) that catalyzes the initial and rate-limiting step in sphingolipid biosynthesis by condensing L-serine and activated acyl-CoA (most commonly palmitoyl-CoA) to form long-chain bases. The SPT complex is also composed of SPTLC2 or SPTLC3 and SPTSSA or SPTSSB. Within this complex, the heterodimer with SPTLC2 or SPTLC3 forms the catalytic core. The composition of the serine palmitoyltransferase (SPT) complex determines the substrate preference. The SPTLC1-SPTLC2-SPTSSA complex shows a strong preference for C16-CoA substrate, while the SPTLC1-SPTLC3-SPTSSA isozyme uses both C14-CoA and C16-CoA as substrates, with a slight preference for C14-CoA. The SPTLC1-SPTLC2-SPTSSB complex shows a strong preference for C18-CoA substrate, while the SPTLC1-SPTLC3-SPTSSB isozyme displays an ability to use a broader range of acyl-CoAs, without apparent preference. Required for adipocyte cell viability and metabolic homeostasis. The sequence is that of Serine palmitoyltransferase 1 (SPTLC1) from Pongo abelii (Sumatran orangutan).